A 217-amino-acid polypeptide reads, in one-letter code: Probable transaldolase (217 aa).

Lysine 83 acts as the Schiff-base intermediate with substrate in catalysis.

This sequence belongs to the transaldolase family. Type 3B subfamily.

It is found in the cytoplasm. The catalysed reaction is D-sedoheptulose 7-phosphate + D-glyceraldehyde 3-phosphate = D-erythrose 4-phosphate + beta-D-fructose 6-phosphate. Its pathway is carbohydrate degradation; pentose phosphate pathway; D-glyceraldehyde 3-phosphate and beta-D-fructose 6-phosphate from D-ribose 5-phosphate and D-xylulose 5-phosphate (non-oxidative stage): step 2/3. Transaldolase is important for the balance of metabolites in the pentose-phosphate pathway. The chain is Probable transaldolase from Hydrogenobaculum sp. (strain Y04AAS1).